A 121-amino-acid chain; its full sequence is uncharacterized protein (121 aa).

Helical transmembrane passes span 26–46 (YACSIFLLSSYCGNCLTAVAT), 57–77 (SIPLLTLVLLPSTTPSSSVLI), and 90–110 (SFCFTLALLSLLIPPLKLLCV).

The protein resides in the membrane. This is an uncharacterized protein from Saccharomyces cerevisiae (strain ATCC 204508 / S288c) (Baker's yeast).